A 560-amino-acid chain; its full sequence is MKSALKKSVVSTSISLILASGMAAFAAHAADDVKLKATKTNVAFSDFTPTEYSTKGKPNIIVLTMDDLGYGQLPFDKGSFDPKTMENREVVDTYKIGIDKAIEAAQKSTPTLLSLMDEGVRFTNGYVAHGVSGPSRAAIMTGRAPARFGVYSNTDAQDGIPLTETFLPELFQNHGYYTAAVGKWHLSKISNVPVPEDKQTRDYHDNFTTFSAEEWQPQNRGFDYFMGFHAAGTAYYNSPSLFKNRERVPAKGYISDQLTDEAIGVVDRAKTLDQPFMLYLAYNAPHLPNDNPAPDQYQKQFNTGSQTADNYYASVYSVDQGVKRILEQLKKNGQYDNTIILFTSDNGAVIDGPLPLNGAQKGYKSQTYPGGTHTPMFMWWKGKLQPGNYDKLISAMDFYPTALDAADISIPKDLKLDGVSLLPWLQDKKQGEPHKNLTWITSYSHWFDEENIPFWDNYHKFVRHQSDDYPHNPNTEDLSQFSYTVRNNDYSLVYTVENNQLGLYKLTDLQQKDNLAAANPQVVKEMQGVVREFIDSSQPPLSEVNQEKFNNIKKALSEAK.

An N-terminal signal peptide occupies residues 1–29; sequence MKSALKKSVVSTSISLILASGMAAFAAHA. Ca(2+) contacts are provided by aspartate 66, aspartate 67, and serine 132. The active-site Nucleophile is the serine 132. Serine 132 is modified (3-oxoalanine (Ser)). Histidine 185 is a catalytic residue. The Ca(2+) site is built by aspartate 345 and asparagine 346.

Belongs to the sulfatase family. The cofactor is Ca(2+). Post-translationally, the conversion to 3-oxoalanine (also known as C-formylglycine, FGly), of a serine or cysteine residue in prokaryotes and of a cysteine residue in eukaryotes, is critical for catalytic activity.

This is an uncharacterized protein from Escherichia coli (strain K12).